A 379-amino-acid chain; its full sequence is MRATKAIIHLDNLQYNIKEIKKRLNKNVKICLPVKADAYGHGAVRVAVAAIRAGVSYLAVASIQEAVELREAGIVAPIISLSLPVLEEIPELLKYDIEPLVIDEEFINDLNRFAKKLNKKAWVHLKIDTGMRRIGCSPMEAVKLAVQIDRAENLELKGVCTHFAVSDSTDEKNIKFTKKQISVFKDSIKEIKKAGINPGLIHAANSGSVLQYPEAQFDMVRPGILVYGYAPSPSLNSLIDLKPVMELVTQVVLIKKIEKDTSVSYDRCWTAEKETFVATLPIGYADGLMRSLSGLKVRIGKDFFPIIGRICMDQCMIDIGASPWVQRWDEVCIFGPVSKEHPKNNTAQDLAKIAGTIPYELTCDINKRVPRIFIDETIQ.

K35 acts as the Proton acceptor; specific for D-alanine in catalysis. At K35 the chain carries N6-(pyridoxal phosphate)lysine. R133 is a binding site for substrate. Y265 acts as the Proton acceptor; specific for L-alanine in catalysis. Residue M312 coordinates substrate.

Belongs to the alanine racemase family. The cofactor is pyridoxal 5'-phosphate.

It catalyses the reaction L-alanine = D-alanine. It participates in amino-acid biosynthesis; D-alanine biosynthesis; D-alanine from L-alanine: step 1/1. Catalyzes the interconversion of L-alanine and D-alanine. May also act on other amino acids. This is Alanine racemase (alr) from Treponema denticola (strain ATCC 35405 / DSM 14222 / CIP 103919 / JCM 8153 / KCTC 15104).